The chain runs to 115 residues: NADH-ubiquinone oxidoreductase chain 3 (115 aa).

Transmembrane regions (helical) follow at residues 1–21 (MMMLMTSITISFLLPMIVMLL), 58–78 (IAVIFLIFDVEIALILPIVII), and 84–104 (IMVWTLSTMLFIIILLVGLYY).

The protein belongs to the complex I subunit 3 family.

Its subcellular location is the mitochondrion membrane. It catalyses the reaction a ubiquinone + NADH + 5 H(+)(in) = a ubiquinol + NAD(+) + 4 H(+)(out). Functionally, core subunit of the mitochondrial membrane respiratory chain NADH dehydrogenase (Complex I) that is believed to belong to the minimal assembly required for catalysis. Complex I functions in the transfer of electrons from NADH to the respiratory chain. The immediate electron acceptor for the enzyme is believed to be ubiquinone. This chain is NADH-ubiquinone oxidoreductase chain 3 (ND3), found in Locusta migratoria (Migratory locust).